Here is a 395-residue protein sequence, read N- to C-terminus: uncharacterized protein (395 aa).

2 disordered regions span residues 17 to 155 and 276 to 304; these read EVKK…QVKT and EERE…HEQK. Polar residues-rich tracts occupy residues 42–71 and 81–96; these read DGNN…SNVV and GDAS…NVVK. Residues 103 to 133 show a composition bias toward basic and acidic residues; the sequence is VAEKPEKEDLAVIESEDKAAKPDGEIKKNVE. Low complexity predominate over residues 134-143; it reads TEVTSRSTSS. Composition is skewed to basic and acidic residues over residues 144-155 and 276-290; these read QEKDELEKQVKT and EERE…KEQS. The stretch at 224–351 forms a coiled coil; sequence LKMNGKEDDL…QRRLKELEAM (128 aa). Over residues 291-300 the composition is skewed to polar residues; sequence SEGSKTANQT.

Its subcellular location is the cytoplasm. This is an uncharacterized protein from Schizosaccharomyces pombe (strain 972 / ATCC 24843) (Fission yeast).